A 120-amino-acid polypeptide reads, in one-letter code: uncharacterized protein (120 aa).

It is found in the mitochondrion. This is an uncharacterized protein from Arabidopsis thaliana (Mouse-ear cress).